Reading from the N-terminus, the 349-residue chain is Histidinol-phosphate aminotransferase (349 aa).

The tract at residues 1 to 22 (MVSIRPSVRHTPAYVPGEQPQT) is disordered. K207 carries the post-translational modification N6-(pyridoxal phosphate)lysine.

Belongs to the class-II pyridoxal-phosphate-dependent aminotransferase family. Histidinol-phosphate aminotransferase subfamily. In terms of assembly, homodimer. Pyridoxal 5'-phosphate serves as cofactor.

The catalysed reaction is L-histidinol phosphate + 2-oxoglutarate = 3-(imidazol-4-yl)-2-oxopropyl phosphate + L-glutamate. Its pathway is amino-acid biosynthesis; L-histidine biosynthesis; L-histidine from 5-phospho-alpha-D-ribose 1-diphosphate: step 7/9. This is Histidinol-phosphate aminotransferase (hisC) from Synechocystis sp. (strain ATCC 27184 / PCC 6803 / Kazusa).